The chain runs to 260 residues: Isopentenyl phosphate kinase (260 aa).

Position 6 to 10 (6 to 10 (KLGGS)) interacts with ATP. Glycine 55 provides a ligand contact to substrate. Residue glycine 56 participates in ATP binding. Residues histidine 60 and glycine 159 each coordinate substrate. Aspartate 180, glycine 217, and lysine 221 together coordinate ATP.

The protein belongs to the isopentenyl phosphate kinase family. In terms of assembly, homodimer.

It catalyses the reaction isopentenyl phosphate + ATP = isopentenyl diphosphate + ADP. Catalyzes the formation of isopentenyl diphosphate (IPP), the building block of all isoprenoids. Has no activity with farnesyl phosphate. This Methanocaldococcus jannaschii (strain ATCC 43067 / DSM 2661 / JAL-1 / JCM 10045 / NBRC 100440) (Methanococcus jannaschii) protein is Isopentenyl phosphate kinase.